The following is a 361-amino-acid chain: MLLELARWLQQLESLFGLFNYLTFRGILAALTALFLSLWMGPAVIRKLAQFKGGQPIRQDGPQTHFSKAGTPTMGGSLILLTVTLSVLLWGDLRNRYVWLVLAVMICFGAIGWYDDWIKIVRRDPNGLKSRWKYLLQSIFGLAAGLFLYYTADVPAAITFYIPMFKSIALPLVGVSFVVIAYFWIVGFSNAVNLTDGLDGLAIMPTVLVACALGVFAYASGNVVFAEYLKIPLIPGAGELIIICSAIAGAGLGFLWFNTYPAMVFMGDIGALSLGAVLGTIAVIVRQEMVLVIMGGVFVIETLSVIIQVASFKLTGKRVFRMAPIHHHFELKGWPEPRVIVRFWIISVVLVLIGLATLKVR.

The next 10 helical transmembrane spans lie at R25–I45, T73–L93, V98–I118, I139–T159, I168–F188, G200–S220, A237–F257, V264–I284, M289–V309, and V339–K359.

The protein belongs to the glycosyltransferase 4 family. MraY subfamily. Mg(2+) is required as a cofactor.

Its subcellular location is the cell inner membrane. It carries out the reaction UDP-N-acetyl-alpha-D-muramoyl-L-alanyl-gamma-D-glutamyl-meso-2,6-diaminopimeloyl-D-alanyl-D-alanine + di-trans,octa-cis-undecaprenyl phosphate = di-trans,octa-cis-undecaprenyl diphospho-N-acetyl-alpha-D-muramoyl-L-alanyl-D-glutamyl-meso-2,6-diaminopimeloyl-D-alanyl-D-alanine + UMP. The protein operates within cell wall biogenesis; peptidoglycan biosynthesis. Catalyzes the initial step of the lipid cycle reactions in the biosynthesis of the cell wall peptidoglycan: transfers peptidoglycan precursor phospho-MurNAc-pentapeptide from UDP-MurNAc-pentapeptide onto the lipid carrier undecaprenyl phosphate, yielding undecaprenyl-pyrophosphoryl-MurNAc-pentapeptide, known as lipid I. The chain is Phospho-N-acetylmuramoyl-pentapeptide-transferase from Xanthomonas oryzae pv. oryzae (strain MAFF 311018).